The sequence spans 366 residues: Endogenous Bornavirus-like nucleoprotein 1 (366 aa).

Polar residues predominate over residues M1–D15. The segment at M1–S22 is disordered.

In terms of tissue distribution, expression detected by RT-PCR in a few cell lines, including OL, HEK293T and MOLT-4. Not observed in HeLa cells.

Functionally, may act as an RNA-binding protein. Highly homologous to the bornavirus nucleocapsid N protein that binds viral RNA and oligomerizes. The polypeptide is Endogenous Bornavirus-like nucleoprotein 1 (EBLN1) (Homo sapiens (Human)).